Reading from the N-terminus, the 793-residue chain is Phenylalanine--tRNA ligase beta subunit (793 aa).

The tRNA-binding domain maps to A39–H148. The 76-residue stretch at P401–S476 folds into the B5 domain. Residues D454, D460, E463, and E464 each coordinate Mg(2+). The region spanning S699–R792 is the FDX-ACB domain.

Belongs to the phenylalanyl-tRNA synthetase beta subunit family. Type 1 subfamily. Tetramer of two alpha and two beta subunits. Requires Mg(2+) as cofactor.

Its subcellular location is the cytoplasm. It catalyses the reaction tRNA(Phe) + L-phenylalanine + ATP = L-phenylalanyl-tRNA(Phe) + AMP + diphosphate + H(+). This Nitrosococcus oceani (strain ATCC 19707 / BCRC 17464 / JCM 30415 / NCIMB 11848 / C-107) protein is Phenylalanine--tRNA ligase beta subunit.